The primary structure comprises 556 residues: Trigger factor (556 aa).

The PPIase FKBP-type domain maps to 169–255; sequence GDVVVIDFAA…LREIKAKELP (87 aa). Over residues 438-452 the composition is skewed to polar residues; it reads VDSEGNPTQAPTSLA. Positions 438 to 556 are disordered; it reads VDSEGNPTQA…KPSKKDKKGK (119 aa). The segment covering 461-472 has biased composition (acidic residues); the sequence is PEAEFEADEPEA. 2 stretches are compositionally biased toward low complexity: residues 486–503 and 511–526; these read ETAT…AEAE and EASP…AEAT.

This sequence belongs to the FKBP-type PPIase family. Tig subfamily.

The protein localises to the cytoplasm. It carries out the reaction [protein]-peptidylproline (omega=180) = [protein]-peptidylproline (omega=0). Its function is as follows. Involved in protein export. Acts as a chaperone by maintaining the newly synthesized protein in an open conformation. Functions as a peptidyl-prolyl cis-trans isomerase. The sequence is that of Trigger factor from Synechococcus sp. (strain JA-2-3B'a(2-13)) (Cyanobacteria bacterium Yellowstone B-Prime).